Consider the following 1054-residue polypeptide: SMC5-SMC6 complex localization factor protein 1 (1054 aa).

BRCT domains lie at 2–80 (EDSA…AKSG) and 121–199 (PGAF…LLEK). The disordered stretch occupies residues 283-303 (RHGLENQKETKKKDKNIQRSY). Residues 284 to 299 (HGLENQKETKKKDKNI) are compositionally biased toward basic and acidic residues. Positions 407–1054 (PRGILNLIEN…MMCQSITELS (648 aa)) are NSE5-like domain; mediates interaction with SLF2. ANK repeat units follow at residues 802–832 (KGETALHRVCIKNQVEKLIILLSLPGIDINV), 836–865 (AGWTPLHEACNYGNTECVQEILQRCPEVDL), and 870–900 (DGVTPLHDALSNGHVEIGKLLLQRGGPELLQ).

In terms of assembly, interacts (via BRCT domains) with RAD18 (via C-terminus and phosphorylated form); this interaction is required for efficient repair of UV-induced DNA damage. Interacts (via N-terminus) with SLF2; this interaction links RAD18 to the SMC5-SMC6 complex. Interacts (via BRCT domains) with RAD18; this interaction occurs in a SLF2-independent manner. Interacts with SMC6. As to expression, widely expressed. Expressed in testis. Expressed in spermatocytes.

It localises to the nucleus. It is found in the cytoplasm. Its subcellular location is the cytoskeleton. The protein localises to the microtubule organizing center. The protein resides in the centrosome. Functionally, plays a role in the DNA damage response (DDR) pathway by regulating postreplication repair of UV-damaged DNA and genomic stability maintenance. The SLF1-SLF2 complex acts to link RAD18 with the SMC5-SMC6 complex at replication-coupled interstrand cross-links (ICL) and DNA double-strand breaks (DSBs) sites on chromatin during DNA repair in response to stalled replication forks. Promotes the recruitment of SLF2 and the SMC5-SMC6 complex to DNA lesions. The polypeptide is SMC5-SMC6 complex localization factor protein 1 (Mus musculus (Mouse)).